The primary structure comprises 96 residues: UPF0251 protein Ssed_3913 (96 aa).

It belongs to the UPF0251 family.

The sequence is that of UPF0251 protein Ssed_3913 from Shewanella sediminis (strain HAW-EB3).